The following is a 75-amino-acid chain: Kappa-scoloptoxin(03)-Ssm1d (75 aa).

A signal peptide spans 1–23 (MKLSMAILLVMALIIFTLDKNYS).

Belongs to the scoloptoxin-03 family. Post-translationally, contains 3 disulfide bonds. Expressed by the venom gland.

The protein localises to the secreted. Functionally, inhibits voltage-gated potassium channels. This is Kappa-scoloptoxin(03)-Ssm1d from Scolopendra mutilans (Chinese red-headed centipede).